The chain runs to 138 residues: Large ribosomal subunit protein uL16c (138 aa).

It belongs to the universal ribosomal protein uL16 family. As to quaternary structure, part of the 50S ribosomal subunit.

Its subcellular location is the plastid. It localises to the chloroplast. This chain is Large ribosomal subunit protein uL16c, found in Chaetosphaeridium globosum (Charophycean green alga).